The chain runs to 600 residues: DNA mismatch repair protein MutL (600 aa).

Residues 327–405 (DGSRAATTGA…FSPQPAAAEP (79 aa)) are disordered. Over residues 349 to 367 (PNSQRPQTAWSAETSSSRP) the composition is skewed to polar residues.

Belongs to the DNA mismatch repair MutL/HexB family.

In terms of biological role, this protein is involved in the repair of mismatches in DNA. It is required for dam-dependent methyl-directed DNA mismatch repair. May act as a 'molecular matchmaker', a protein that promotes the formation of a stable complex between two or more DNA-binding proteins in an ATP-dependent manner without itself being part of a final effector complex. The polypeptide is DNA mismatch repair protein MutL (Rhizobium johnstonii (strain DSM 114642 / LMG 32736 / 3841) (Rhizobium leguminosarum bv. viciae)).